A 120-amino-acid chain; its full sequence is Acylphosphatase-1 (120 aa).

Residue alanine 2 is modified to N-acetylalanine. The region spanning 8–98 is the Acylphosphatase-like domain; it reads SCEFEVFGRV…YGYANFHIKP (91 aa). Catalysis depends on residues arginine 23 and asparagine 41. Residues 91–120 are disordered; sequence YANFHIKPDPHENRPVHEGLGSSSSHHDSN. Over residues 96 to 107 the composition is skewed to basic and acidic residues; the sequence is IKPDPHENRPVH.

Belongs to the acylphosphatase family.

Its subcellular location is the cytoplasm. It carries out the reaction an acyl phosphate + H2O = a carboxylate + phosphate + H(+). The sequence is that of Acylphosphatase-1 (Acyp) from Drosophila melanogaster (Fruit fly).